We begin with the raw amino-acid sequence, 87 residues long: Neurotoxin LmNaTx64.1 (87 aa).

The N-terminal stretch at 1-18 (MKILFLIILTAFFIGVHC) is a signal peptide. The region spanning 19-85 (KHGYPIIRAG…TWSRATNKCK (67 aa)) is the LCN-type CS-alpha/beta domain. Intrachain disulfides connect Cys-33-Cys-84, Cys-37-Cys-58, Cys-44-Cys-65, and Cys-48-Cys-67. Cysteine amide is present on Cys-84.

It belongs to the long (4 C-C) scorpion toxin superfamily. Sodium channel inhibitor family. Beta subfamily. Expressed by the venom gland.

The protein resides in the secreted. In terms of biological role, binds voltage-independently at site-4 of sodium channels (Nav) and shift the voltage of activation toward more negative potentials thereby affecting sodium channel activation and promoting spontaneous and repetitive firing. This chain is Neurotoxin LmNaTx64.1, found in Lychas mucronatus (Chinese swimming scorpion).